A 789-amino-acid chain; its full sequence is Alpha-glucosidase 2 (789 aa).

2 disordered regions span residues 1–24 (MTGLSPSGDIKPLLDDESQRPRVI) and 512–531 (ELNPQSLSSGLDDYPRASHP). The active-site Proton donor is aspartate 523. Glutamate 756 (proton acceptor) is an active-site residue.

The protein belongs to the glycosyl hydrolase 63 family.

The protein operates within glycan metabolism; N-glycan degradation. This chain is Alpha-glucosidase 2 (GCS2), found in Arabidopsis thaliana (Mouse-ear cress).